Consider the following 224-residue polypeptide: Leucyl/phenylalanyl-tRNA--protein transferase (224 aa).

It belongs to the L/F-transferase family.

The protein resides in the cytoplasm. It catalyses the reaction N-terminal L-lysyl-[protein] + L-leucyl-tRNA(Leu) = N-terminal L-leucyl-L-lysyl-[protein] + tRNA(Leu) + H(+). It carries out the reaction N-terminal L-arginyl-[protein] + L-leucyl-tRNA(Leu) = N-terminal L-leucyl-L-arginyl-[protein] + tRNA(Leu) + H(+). The enzyme catalyses L-phenylalanyl-tRNA(Phe) + an N-terminal L-alpha-aminoacyl-[protein] = an N-terminal L-phenylalanyl-L-alpha-aminoacyl-[protein] + tRNA(Phe). Functionally, functions in the N-end rule pathway of protein degradation where it conjugates Leu, Phe and, less efficiently, Met from aminoacyl-tRNAs to the N-termini of proteins containing an N-terminal arginine or lysine. The chain is Leucyl/phenylalanyl-tRNA--protein transferase from Rhodopseudomonas palustris (strain HaA2).